Consider the following 606-residue polypeptide: Phosphomethylpyrimidine synthase (606 aa).

The tract at residues 84–103 (EPYPARSVKPEDNGLTSSPI) is disordered. Residues asparagine 209, methionine 238, tyrosine 267, histidine 303, 323-325 (SRG), 364-367 (DGLR), and glutamate 403 each bind substrate. Histidine 407 contributes to the Zn(2+) binding site. Tyrosine 430 serves as a coordination point for substrate. Histidine 471 contributes to the Zn(2+) binding site. 3 residues coordinate [4Fe-4S] cluster: cysteine 551, cysteine 554, and cysteine 559.

Belongs to the ThiC family. As to quaternary structure, homodimer. The cofactor is [4Fe-4S] cluster.

It catalyses the reaction 5-amino-1-(5-phospho-beta-D-ribosyl)imidazole + S-adenosyl-L-methionine = 4-amino-2-methyl-5-(phosphooxymethyl)pyrimidine + CO + 5'-deoxyadenosine + formate + L-methionine + 3 H(+). Its pathway is cofactor biosynthesis; thiamine diphosphate biosynthesis. Its function is as follows. Catalyzes the synthesis of the hydroxymethylpyrimidine phosphate (HMP-P) moiety of thiamine from aminoimidazole ribotide (AIR) in a radical S-adenosyl-L-methionine (SAM)-dependent reaction. The chain is Phosphomethylpyrimidine synthase from Bartonella tribocorum (strain CIP 105476 / IBS 506).